Reading from the N-terminus, the 304-residue chain is DCN1-like protein 3 (304 aa).

Disordered stretches follow at residues 1–87 (MGQC…EESS) and 284–304 (EVEG…EEQT). Glycine 2 carries N-myristoyl glycine lipidation. One can recognise a DCUN1 domain in the interval 86-278 (SSLQRLEELF…LFDTFVEWEM (193 aa)).

Part of a complex containing DCUN1D3, CUL3 and RBX1. Interacts (via the DCUN1 domain) with the unneddylated cullins: interacts with CUL1, CUL2, CUL3, CUL4A, CUL4B and CUL5; these interactions promote the cullin neddylation and the identity of the cullin dictates the affinity of the interaction. Interacts preferentially with CUL3; this interaction triggers the relocalization of CUL3 to the cell membrane where CUL3 is neddylated. Interacts (via DCUN1 domain) with RBX1. May also interact with regulators or subunits of cullin-RING ligases such as RNF7, ELOB and DDB1; these interactions are bridged by cullins. Interacts (via DCUN1 domain) with CAND1; this interaction is bridged by cullins and strongly inhibits cullin neddylation. These CAND-cullin-DCNL complexes can only be neddylated in the presence of a substrate adapter. Interacts (via DCUN1 domain) with the N-terminally acetylated form of UBE2M and UBE2F. As to expression, highest levels of expression are in the testis. Very low levels of expression in the heart, brain, skeletal muscle, kidney, liver, spleen, lung and ovary.

The protein localises to the cell membrane. Its subcellular location is the cytoplasm. The protein resides in the nucleus. It is found in the perinuclear region. Its function is as follows. Contributes to the neddylation of all cullins by transferring NEDD8 from N-terminally acetylated NEDD8-conjugating E2s enzyme to different cullin C-terminal domain-RBX complexes and may play a role in the cell cycle progression by regulating the SCF ubiquitin E3 ligase complex, after UV damage. At the cell membrane, can promote and as well inhibit cullins neddylation. The chain is DCN1-like protein 3 from Mus musculus (Mouse).